The chain runs to 146 residues: Multiple coagulation factor deficiency protein 2 (146 aa).

The signal sequence occupies residues 1 to 26 (MTMRSLLRTPFLCGLLWAFCAPGARA). Residues 68 to 103 (SPQELQLHYFKMHDYDGNNLLDGLELSTAITHVHKE) form the EF-hand 1 domain. Ca(2+) is bound by residues D81, D83, N85, and E92. S106 is subject to Phosphoserine. The 31-residue stretch at 116–146 (ELINIIDGVLRDDDKNNDGYIDYAEFAKSLQ) folds into the EF-hand 2 domain. The Ca(2+) site is built by D129, N131, D133, Y135, and E140.

In terms of assembly, interacts in a calcium-dependent manner with LMAN1.

The protein localises to the endoplasmic reticulum-Golgi intermediate compartment. Its subcellular location is the endoplasmic reticulum. It is found in the golgi apparatus. In terms of biological role, the MCFD2-LMAN1 complex forms a specific cargo receptor for the ER-to-Golgi transport of selected proteins. Plays a role in the secretion of coagulation factors. The protein is Multiple coagulation factor deficiency protein 2 (MCFD2) of Homo sapiens (Human).